Reading from the N-terminus, the 60-residue chain is Sec-independent protein translocase protein TatA (60 aa).

Residues 1 to 21 (MLSNIGVPGLILILVIALVIF) form a helical membrane-spanning segment.

This sequence belongs to the TatA/E family. In terms of assembly, forms a complex with TatC.

Its subcellular location is the cell membrane. In terms of biological role, part of the twin-arginine translocation (Tat) system that transports large folded proteins containing a characteristic twin-arginine motif in their signal peptide across membranes. TatA could form the protein-conducting channel of the Tat system. The chain is Sec-independent protein translocase protein TatA from Anoxybacillus flavithermus (strain DSM 21510 / WK1).